A 418-amino-acid chain; its full sequence is tRNA-2-methylthio-N(6)-dimethylallyladenosine synthase (418 aa).

The MTTase N-terminal domain occupies 1–118; that stretch reads MNYLIETIGC…ALKIMNLFRT (118 aa). [4Fe-4S] cluster-binding residues include cysteine 10, cysteine 46, cysteine 80, cysteine 143, cysteine 147, and cysteine 150. Positions 129-356 constitute a Radical SAM core domain; sequence IKSKIVRYIT…LKESNKISIE (228 aa). A TRAM domain is found at 359-418; sequence SEMLGSTQQVLAEEIKNGIIKARTKNGRKVFAEGRKEYIGKHINVNIKEAKINSLFGDIV.

It belongs to the methylthiotransferase family. MiaB subfamily. As to quaternary structure, monomer. Requires [4Fe-4S] cluster as cofactor.

The protein resides in the cytoplasm. It catalyses the reaction N(6)-dimethylallyladenosine(37) in tRNA + (sulfur carrier)-SH + AH2 + 2 S-adenosyl-L-methionine = 2-methylsulfanyl-N(6)-dimethylallyladenosine(37) in tRNA + (sulfur carrier)-H + 5'-deoxyadenosine + L-methionine + A + S-adenosyl-L-homocysteine + 2 H(+). In terms of biological role, catalyzes the methylthiolation of N6-(dimethylallyl)adenosine (i(6)A), leading to the formation of 2-methylthio-N6-(dimethylallyl)adenosine (ms(2)i(6)A) at position 37 in tRNAs that read codons beginning with uridine. The chain is tRNA-2-methylthio-N(6)-dimethylallyladenosine synthase from Endomicrobium trichonymphae.